We begin with the raw amino-acid sequence, 209 residues long: Molybdenum cofactor guanylyltransferase (209 aa).

GTP contacts are provided by residues 13-15, K26, N54, D72, and D107; that span reads LAG. D107 is a binding site for Mg(2+).

The protein belongs to the MobA family. Monomer. Requires Mg(2+) as cofactor.

It localises to the cytoplasm. It carries out the reaction Mo-molybdopterin + GTP + H(+) = Mo-molybdopterin guanine dinucleotide + diphosphate. Its function is as follows. Transfers a GMP moiety from GTP to Mo-molybdopterin (Mo-MPT) cofactor (Moco or molybdenum cofactor) to form Mo-molybdopterin guanine dinucleotide (Mo-MGD) cofactor. The protein is Molybdenum cofactor guanylyltransferase of Nitrobacter hamburgensis (strain DSM 10229 / NCIMB 13809 / X14).